The sequence spans 216 residues: Eukaryotic translation initiation factor 3 subunit K (216 aa).

The PCI domain maps to 40 to 202; that stretch reads YDLDANLAVL…HIKSKNIAEK (163 aa).

This sequence belongs to the eIF-3 subunit K family. In terms of assembly, component of the eukaryotic translation initiation factor 3 (eIF-3) complex.

It is found in the cytoplasm. Its function is as follows. Component of the eukaryotic translation initiation factor 3 (eIF-3) complex, which is involved in protein synthesis of a specialized repertoire of mRNAs and, together with other initiation factors, stimulates binding of mRNA and methionyl-tRNAi to the 40S ribosome. The eIF-3 complex specifically targets and initiates translation of a subset of mRNAs involved in cell proliferation. The polypeptide is Eukaryotic translation initiation factor 3 subunit K (Nematostella vectensis (Starlet sea anemone)).